A 343-amino-acid polypeptide reads, in one-letter code: RNA-binding protein 43 (343 aa).

In terms of domain architecture, RRM spans 15 to 90 (RTVVVSGLPV…PRLTVSHFSE (76 aa)).

In Mus musculus (Mouse), this protein is RNA-binding protein 43 (Rbm43).